A 968-amino-acid polypeptide reads, in one-letter code: AP2-associated protein kinase 1 (968 aa).

An N-acetylmethionine modification is found at M1. A compositionally biased stretch (basic and acidic residues) spans 1 to 11 (MKKFFDSRREQ). Residues 1 to 25 (MKKFFDSRREQGGSGLGSGSSGGGG) form a disordered region. Gly residues predominate over residues 12–25 (GGSGLGSGSSGGGG). S14 carries the phosphoserine modification. In terms of domain architecture, Protein kinase spans 46–315 (VTVDEVLAEG…QVSFFSFKLL (270 aa)). ATP is bound by residues 52-60 (LAEGGFAIV) and K74. The active-site Proton acceptor is the D176. The residue at position 234 (Y234) is a Phosphotyrosine. S235 carries the phosphoserine modification. 2 disordered regions span residues 327-485 (SPIP…AQAP) and 578-640 (IQPP…AGHR). Residues T354 and T389 each carry the phosphothreonine modification. R391 carries the omega-N-methylarginine modification. Positions 437–448 (QAPPAPQQPPSA) are enriched in pro residues. 2 stretches are compositionally biased toward low complexity: residues 449-472 (PAQG…LKQQ) and 578-589 (IQPPQAQPATAS). At T613 the chain carries Phosphothreonine. S625 is subject to Phosphoserine. T627 carries the post-translational modification Phosphothreonine. Phosphoserine occurs at positions 630, 631, 644, and 657. Phosphothreonine is present on T660. The tract at residues 671-708 (SLNKSKSATTTPSGSPRASQQNVYNPSEGSTWNPFDDD) is disordered. The span at 679 to 703 (TTTPSGSPRASQQNVYNPSEGSTWN) shows a compositional bias: polar residues. Residue Y694 is modified to Phosphotyrosine. A phosphoserine mark is found at S738, S853, S944, and S945. The interval 830-967 (EKADVAVESL…SLLLVDQLID (138 aa)) is clathrin-binding domain (CBD). Disordered regions lie at residues 843–862 (LEPP…ASNR) and 929–952 (PVLI…ESSL). Positions 851-862 (LPSQTESVASNR) are enriched in polar residues. A compositionally biased stretch (low complexity) spans 938-951 (GGHSRNSSGSSESS).

This sequence belongs to the protein kinase superfamily. Ser/Thr protein kinase family. As to quaternary structure, interacts (via CBD domain) with clathrin. Interacts with AP-2 complex. Interacts with NUMB. Interacts with alpha-adaptin. Interacts with EPS15. Interacts with membrane-bound activated NOTCH1 but not with the inactive full-length form of NOTCH1. Preferentially interacts with monoubiquitinated activated NOTCH1 compared to the non-ubiquitinated form. Autophosphorylated.

The protein resides in the cell membrane. It is found in the membrane. It localises to the clathrin-coated pit. Its subcellular location is the presynapse. The enzyme catalyses L-seryl-[protein] + ATP = O-phospho-L-seryl-[protein] + ADP + H(+). It carries out the reaction L-threonyl-[protein] + ATP = O-phospho-L-threonyl-[protein] + ADP + H(+). Stimulated by clathrin. Functionally, regulates clathrin-mediated endocytosis by phosphorylating the AP2M1/mu2 subunit of the adaptor protein complex 2 (AP-2) which ensures high affinity binding of AP-2 to cargo membrane proteins during the initial stages of endocytosis. Preferentially, may phosphorylate substrates on threonine residues. Regulates phosphorylation of other AP-2 subunits as well as AP-2 localization and AP-2-mediated internalization of ligand complexes. Phosphorylates NUMB and regulates its cellular localization, promoting NUMB localization to endosomes. Binds to and stabilizes the activated form of NOTCH1, increases its localization in endosomes and regulates its transcriptional activity. This chain is AP2-associated protein kinase 1 (AAK1), found in Sus scrofa (Pig).